Reading from the N-terminus, the 160-residue chain is MTRKQRRATFIAVSLGILALAVGLVLYAMRDSIVYFYSPSDVVERGVEPGQRIRLGGLVEEGSLEQLGDAYIRFNVTDFAETIPVTYRGVLPDLFREGQGVVTEGALDGTGAFIADNVLAKHDEYYMPPEVADALKRTGNWQGEGAEAPHSETYGQGSYP.

Over Met-1 to Arg-7 the chain is Cytoplasmic. Residues Ala-8–Ala-28 traverse the membrane as a helical; Signal-anchor for type II membrane protein segment. Residues Met-29–Pro-160 are Periplasmic-facing. His-122 and Tyr-126 together coordinate heme. Residues Trp-141–Pro-160 are disordered.

Belongs to the CcmE/CycJ family.

The protein resides in the cell inner membrane. Functionally, heme chaperone required for the biogenesis of c-type cytochromes. Transiently binds heme delivered by CcmC and transfers the heme to apo-cytochromes in a process facilitated by CcmF and CcmH. In Parvibaculum lavamentivorans (strain DS-1 / DSM 13023 / NCIMB 13966), this protein is Cytochrome c-type biogenesis protein CcmE.